The sequence spans 369 residues: tRNA 2-selenouridine synthase (369 aa).

The Rhodanese domain maps to 12–136 (FLDDIPLMDV…LRNFLFETTR (125 aa)). The active-site S-selanylcysteine intermediate is the cysteine 95.

This sequence belongs to the SelU family. In terms of assembly, monomer.

The enzyme catalyses 5-methylaminomethyl-2-thiouridine(34) in tRNA + selenophosphate + (2E)-geranyl diphosphate + H2O + H(+) = 5-methylaminomethyl-2-selenouridine(34) in tRNA + (2E)-thiogeraniol + phosphate + diphosphate. It catalyses the reaction 5-methylaminomethyl-2-thiouridine(34) in tRNA + (2E)-geranyl diphosphate = 5-methylaminomethyl-S-(2E)-geranyl-thiouridine(34) in tRNA + diphosphate. It carries out the reaction 5-methylaminomethyl-S-(2E)-geranyl-thiouridine(34) in tRNA + selenophosphate + H(+) = 5-methylaminomethyl-2-(Se-phospho)selenouridine(34) in tRNA + (2E)-thiogeraniol. The catalysed reaction is 5-methylaminomethyl-2-(Se-phospho)selenouridine(34) in tRNA + H2O = 5-methylaminomethyl-2-selenouridine(34) in tRNA + phosphate. In terms of biological role, involved in the post-transcriptional modification of the uridine at the wobble position (U34) of tRNA(Lys), tRNA(Glu) and tRNA(Gln). Catalyzes the conversion of 2-thiouridine (S2U-RNA) to 2-selenouridine (Se2U-RNA). Acts in a two-step process involving geranylation of 2-thiouridine (S2U) to S-geranyl-2-thiouridine (geS2U) and subsequent selenation of the latter derivative to 2-selenouridine (Se2U) in the tRNA chain. The chain is tRNA 2-selenouridine synthase from Pseudomonas aeruginosa (strain LESB58).